Consider the following 363-residue polypeptide: Mitogen-activated protein kinase 13 (363 aa).

Residues 33–319 (IPPIEPIGRG…VDEALKQPYL (287 aa)) form the Protein kinase domain. ATP is bound by residues 39–47 (IGRGAYGIV) and Lys-62. Asp-159 (proton acceptor) is an active-site residue. Thr-191 is subject to Phosphothreonine. The short motif at 191-193 (TEY) is the TXY element. Tyr-193 bears the Phosphotyrosine mark. A Phosphothreonine modification is found at Thr-196.

This sequence belongs to the protein kinase superfamily. CMGC Ser/Thr protein kinase family. MAP kinase subfamily. In terms of assembly, interacts with MKK6. Dually phosphorylated on Thr-191 and Tyr-193, which activates the enzyme. As to expression, expressed in roots, stems and flower buds.

It catalyses the reaction L-seryl-[protein] + ATP = O-phospho-L-seryl-[protein] + ADP + H(+). The catalysed reaction is L-threonyl-[protein] + ATP = O-phospho-L-threonyl-[protein] + ADP + H(+). Activated by threonine and tyrosine phosphorylation. Activated by the MAP kinase kinase MKK6 in vitro. In terms of biological role, MKK6-MPK13 module positively regulates lateral root formation. The sequence is that of Mitogen-activated protein kinase 13 (MPK13) from Arabidopsis thaliana (Mouse-ear cress).